Consider the following 84-residue polypeptide: Large ribosomal subunit protein bL31B (84 aa).

The protein belongs to the bacterial ribosomal protein bL31 family. Type B subfamily. Part of the 50S ribosomal subunit.

The polypeptide is Large ribosomal subunit protein bL31B (Streptomyces griseus subsp. griseus (strain JCM 4626 / CBS 651.72 / NBRC 13350 / KCC S-0626 / ISP 5235)).